The primary structure comprises 343 residues: Fructose-1,6-bisphosphatase class 1 (343 aa).

4 residues coordinate Mg(2+): Glu90, Asp109, Leu111, and Asp112. Substrate-binding positions include 112–115 (DGSS) and Asn199. A Mg(2+)-binding site is contributed by Glu271.

The protein belongs to the FBPase class 1 family. Homotetramer. Requires Mg(2+) as cofactor.

Its subcellular location is the cytoplasm. The catalysed reaction is beta-D-fructose 1,6-bisphosphate + H2O = beta-D-fructose 6-phosphate + phosphate. Its pathway is carbohydrate biosynthesis; Calvin cycle. This chain is Fructose-1,6-bisphosphatase class 1, found in Rhodopseudomonas palustris (strain HaA2).